A 199-amino-acid polypeptide reads, in one-letter code: Holliday junction resolvase RecU (199 aa).

4 residues coordinate Mg(2+): threonine 82, aspartate 84, glutamate 97, and glutamine 116.

The protein belongs to the RecU family. Mg(2+) serves as cofactor.

The protein resides in the cytoplasm. It carries out the reaction Endonucleolytic cleavage at a junction such as a reciprocal single-stranded crossover between two homologous DNA duplexes (Holliday junction).. In terms of biological role, endonuclease that resolves Holliday junction intermediates in genetic recombination. Cleaves mobile four-strand junctions by introducing symmetrical nicks in paired strands. Promotes annealing of linear ssDNA with homologous dsDNA. Required for DNA repair, homologous recombination and chromosome segregation. The polypeptide is Holliday junction resolvase RecU (Streptococcus agalactiae serotype Ia (strain ATCC 27591 / A909 / CDC SS700)).